Consider the following 240-residue polypeptide: Thiamine-phosphate synthase (240 aa).

4-amino-2-methyl-5-(diphosphooxymethyl)pyrimidine-binding positions include 63-67 and asparagine 94; that span reads QYREK. Mg(2+)-binding residues include aspartate 95 and aspartate 114. Threonine 133 contributes to the 4-amino-2-methyl-5-(diphosphooxymethyl)pyrimidine binding site. 159-161 is a 2-[(2R,5Z)-2-carboxy-4-methylthiazol-5(2H)-ylidene]ethyl phosphate binding site; it reads TFT. Position 162 (lysine 162) interacts with 4-amino-2-methyl-5-(diphosphooxymethyl)pyrimidine. Residues glycine 190 and 210 to 211 each bind 2-[(2R,5Z)-2-carboxy-4-methylthiazol-5(2H)-ylidene]ethyl phosphate; that span reads IS.

This sequence belongs to the thiamine-phosphate synthase family. Mg(2+) is required as a cofactor.

The catalysed reaction is 2-[(2R,5Z)-2-carboxy-4-methylthiazol-5(2H)-ylidene]ethyl phosphate + 4-amino-2-methyl-5-(diphosphooxymethyl)pyrimidine + 2 H(+) = thiamine phosphate + CO2 + diphosphate. The enzyme catalyses 2-(2-carboxy-4-methylthiazol-5-yl)ethyl phosphate + 4-amino-2-methyl-5-(diphosphooxymethyl)pyrimidine + 2 H(+) = thiamine phosphate + CO2 + diphosphate. It carries out the reaction 4-methyl-5-(2-phosphooxyethyl)-thiazole + 4-amino-2-methyl-5-(diphosphooxymethyl)pyrimidine + H(+) = thiamine phosphate + diphosphate. It functions in the pathway cofactor biosynthesis; thiamine diphosphate biosynthesis; thiamine phosphate from 4-amino-2-methyl-5-diphosphomethylpyrimidine and 4-methyl-5-(2-phosphoethyl)-thiazole: step 1/1. Functionally, condenses 4-methyl-5-(beta-hydroxyethyl)thiazole monophosphate (THZ-P) and 2-methyl-4-amino-5-hydroxymethyl pyrimidine pyrophosphate (HMP-PP) to form thiamine monophosphate (TMP). In Methanosarcina mazei (strain ATCC BAA-159 / DSM 3647 / Goe1 / Go1 / JCM 11833 / OCM 88) (Methanosarcina frisia), this protein is Thiamine-phosphate synthase.